A 384-amino-acid chain; its full sequence is 8-amino-7-oxononanoate synthase (384 aa).

Residue Arg23 coordinates substrate. Residue 110 to 111 (GF) coordinates pyridoxal 5'-phosphate. His135 is a substrate binding site. Pyridoxal 5'-phosphate contacts are provided by Ser179, His206, and Thr232. The residue at position 235 (Lys235) is an N6-(pyridoxal phosphate)lysine. Thr348 provides a ligand contact to substrate.

The protein belongs to the class-II pyridoxal-phosphate-dependent aminotransferase family. BioF subfamily. In terms of assembly, homodimer. Pyridoxal 5'-phosphate serves as cofactor.

It catalyses the reaction 6-carboxyhexanoyl-[ACP] + L-alanine + H(+) = (8S)-8-amino-7-oxononanoate + holo-[ACP] + CO2. It functions in the pathway cofactor biosynthesis; biotin biosynthesis. Catalyzes the decarboxylative condensation of pimeloyl-[acyl-carrier protein] and L-alanine to produce 8-amino-7-oxononanoate (AON), [acyl-carrier protein], and carbon dioxide. The polypeptide is 8-amino-7-oxononanoate synthase (Vibrio cholerae serotype O1 (strain ATCC 39315 / El Tor Inaba N16961)).